We begin with the raw amino-acid sequence, 208 residues long: Protein Nef (208 aa).

A lipid anchor (N-myristoyl glycine; by host) is attached at glycine 2. Serine 6 bears the Phosphoserine; by host mark. The disordered stretch occupies residues 16–51 (IRERMRRTPPTPPAAEGVGAVSQDLERRGAITSSNT). The interval 65-68 (EEDE) is acidic; interacts with host PACS1 and PACS2; stabilizes the interaction of NEF/MHC-I with host AP1M1; necessary for MHC-I internalization. The segment at 72-81 (PVRPQVPLRP) is SH3-binding; interaction with Src family tyrosine kinases. Positions 75-78 (PQVP) match the PxxP; stabilizes the interaction of NEF/MHC-I with host AP1M1; necessary for MHC-I internalization motif. Residues 111–127 (EILDLWVYHTQGYFPDW) form a mediates dimerization, Nef-PTE1 interaction region. The tract at residues 151 to 183 (VDPEEVEKANEGENNCLLHPMSQHGMEDEDKEV) is binding to ATP6V1H. The Dileucine internalization motif; necessary for CD4 internalization signature appears at 167–168 (LL). The Diacidic; necessary for CD4 internalization signature appears at 177–178 (ED).

Belongs to the lentivirus primate group Nef protein family. Monomer; cytosolic form. Homodimer; membrane bound form. Interacts with Nef associated p21-activated kinase (PAK2); this interaction activates PAK2. Associates with the Nef-MHC-I-AP1 complex; this complex is required for MHC-I internalization. Interacts (via C-terminus) with host PI3-kinase. Interacts with host PACS1; this interaction seems to be weak. Interacts with host PACS2. Interacts with host LCK and MAPK3; these interactions inhibit the kinase activity of the latter. Interacts with host ATP6V1H; this interaction may play a role in CD4 endocytosis. Associates with the CD4-Nef-AP2 complex; this complex is required for CD4 internalization. Interacts with host AP2 subunit alpha and AP2 subunit sigma2. Interacts with TCR-zeta chain; this interaction up-regulates the Fas ligand (FasL) surface expression. Interacts with host HCK, LYN, and SRC; these interactions activate the Src family kinases. Interacts with MAP3K5; this interaction inhibits the Fas and TNFR-mediated death signals. Interacts with beta-COP and PTE1. Interacts with human RACK1; this increases Nef phosphorylation by PKC. Interacts with TP53; this interaction decreases the half-life of TP53, protecting the infected cell against p53-mediated apoptosis. In terms of processing, the virion-associated Nef proteins are cleaved by the viral protease to release the soluble C-terminal core protein. Nef is probably cleaved concomitantly with viral structural proteins on maturation of virus particles. Myristoylated. Post-translationally, phosphorylated on serine residues, probably by host PKCdelta and theta.

The protein resides in the host cell membrane. Its subcellular location is the virion. It is found in the secreted. The protein localises to the host Golgi apparatus membrane. Its function is as follows. Factor of infectivity and pathogenicity, required for optimal virus replication. Alters numerous pathways of T-lymphocyte function and down-regulates immunity surface molecules in order to evade host defense and increase viral infectivity. Alters the functionality of other immunity cells, like dendritic cells, monocytes/macrophages and NK cells. In infected CD4(+) T-lymphocytes, down-regulates the surface MHC-I, mature MHC-II, CD4, CD28, CCR5 and CXCR4 molecules. Mediates internalization and degradation of host CD4 through the interaction of with the cytoplasmic tail of CD4, the recruitment of AP-2 (clathrin adapter protein complex 2), internalization through clathrin coated pits, and subsequent transport to endosomes and lysosomes for degradation. Diverts host MHC-I molecules to the trans-Golgi network-associated endosomal compartments by an endocytic pathway to finally target them for degradation. MHC-I down-regulation may involve AP-1 (clathrin adapter protein complex 1) or possibly Src family kinase-ZAP70/Syk-PI3K cascade recruited by PACS2. In consequence infected cells are masked for immune recognition by cytotoxic T-lymphocytes. Decreasing the number of immune receptors also prevents reinfection by more HIV particles (superinfection). Down-regulates host SERINC3 and SERINC5 thereby excluding these proteins from the viral particles. Virion infectivity is drastically higher when SERINC3 or SERINC5 are excluded from the viral envelope, because these host antiviral proteins impair the membrane fusion event necessary for subsequent virion penetration. Functionally, bypasses host T-cell signaling by inducing a transcriptional program nearly identical to that of anti-CD3 cell activation. Interaction with TCR-zeta chain up-regulates the Fas ligand (FasL). Increasing surface FasL molecules and decreasing surface MHC-I molecules on infected CD4(+) cells send attacking cytotoxic CD8+ T-lymphocytes into apoptosis. In terms of biological role, plays a role in optimizing the host cell environment for viral replication without causing cell death by apoptosis. Protects the infected cells from apoptosis in order to keep them alive until the next virus generation is ready to strike. Inhibits the Fas and TNFR-mediated death signals by blocking MAP3K5/ASK1. Decreases the half-life of TP53, protecting the infected cell against p53-mediated apoptosis. Inhibits the apoptotic signals regulated by the Bcl-2 family proteins through the formation of a Nef/PI3-kinase/PAK2 complex that leads to activation of PAK2 and induces phosphorylation of host BAD. Its function is as follows. Extracellular Nef protein targets CD4(+) T-lymphocytes for apoptosis by interacting with CXCR4 surface receptors. The sequence is that of Protein Nef from Human immunodeficiency virus type 1 group M subtype F1 (isolate 93BR020) (HIV-1).